The sequence spans 21 residues: Mast cell protease 3 (21 aa).

The Peptidase S1 domain maps to 1-21 (IIGGVESRPHSRPYMATLEIT). The disordered stretch occupies residues 1–21 (IIGGVESRPHSRPYMATLEIT).

Belongs to the peptidase S1 family. Granzyme subfamily.

Thrombin inactivating protease. Displays chymotrypsin-like substrate specificity. The sequence is that of Mast cell protease 3 (Mcpt3) from Mus musculus (Mouse).